A 905-amino-acid polypeptide reads, in one-letter code: Probable cation-transporting ATPase F (905 aa).

Transmembrane regions (helical) follow at residues 84–104 (EFVD…VGFI), 248–268 (FSKF…GVGL), and 283–303 (ALAV…TLAI). Residue Asp333 is the 4-aspartylphosphate intermediate of the active site. Residues Asp643 and Asp647 each coordinate Mg(2+). 6 helical membrane-spanning segments follow: residues 716-736 (ILAA…ILWI), 738-758 (MTTA…AGIM), 778-798 (TLLV…WELD), 808-828 (TAAL…CRSL), 842-862 (WIIL…YLPA), and 872-892 (IDIG…IVVA).

This sequence belongs to the cation transport ATPase (P-type) (TC 3.A.3) family. Type IIA subfamily.

Its subcellular location is the cell membrane. The catalysed reaction is ATP + H2O = ADP + phosphate + H(+). This chain is Probable cation-transporting ATPase F (ctpF), found in Mycobacterium bovis (strain ATCC BAA-935 / AF2122/97).